The primary structure comprises 511 residues: Myrosinase 4 (511 aa).

The first 23 residues, 1–23 (MAIPKAHYSLAVLVLLFVVVSSS), serve as a signal peptide directing secretion. Disulfide bonds link Cys31–Cys450, Cys39–Cys445, and Cys230–Cys233. N-linked (GlcNAc...) asparagine glycosylation is found at Asn46 and Asn53. Residues Gln64, His165, and 210–211 (NQ) contribute to the a beta-D-glucoside site. A beta-D-glucoside contacts are provided by Tyr351 and Glu418. The active-site Nucleophile is Glu418. N-linked (GlcNAc...) asparagine glycosylation occurs at Asn428. A beta-D-glucoside is bound by residues Trp467, 474 to 475 (EF), and Phe483. A glycan (N-linked (GlcNAc...) asparagine) is linked at Asn489.

The protein belongs to the glycosyl hydrolase 1 family. Specifically expressed in roots.

It carries out the reaction a thioglucoside + H2O = a sugar + a thiol.. The catalysed reaction is Hydrolysis of terminal, non-reducing beta-D-glucosyl residues with release of beta-D-glucose.. Its function is as follows. Hydrolyzes sinigrin and, with lower efficiency, p-nitrophenyl beta-D-glucoside. The sequence is that of Myrosinase 4 from Arabidopsis thaliana (Mouse-ear cress).